The following is a 94-amino-acid chain: Cell division topological specificity factor (94 aa).

It belongs to the MinE family.

In terms of biological role, prevents the cell division inhibition by proteins MinC and MinD at internal division sites while permitting inhibition at polar sites. This ensures cell division at the proper site by restricting the formation of a division septum at the midpoint of the long axis of the cell. In Synechococcus sp. (strain CC9311), this protein is Cell division topological specificity factor.